The primary structure comprises 398 residues: cAMP-dependent protein kinase type 3 (398 aa).

Residues Ser-15 and Ser-55 each carry the phosphoserine modification. Residues Phe-88–Phe-342 form the Protein kinase domain. ATP contacts are provided by residues Leu-94–Val-102 and Lys-117. Asp-211 functions as the Proton acceptor in the catalytic mechanism. Residues Asn-343 to Phe-398 enclose the AGC-kinase C-terminal domain.

This sequence belongs to the protein kinase superfamily. AGC Ser/Thr protein kinase family. cAMP subfamily.

The enzyme catalyses L-seryl-[protein] + ATP = O-phospho-L-seryl-[protein] + ADP + H(+). The catalysed reaction is L-threonyl-[protein] + ATP = O-phospho-L-threonyl-[protein] + ADP + H(+). With respect to regulation, activated by cAMP. The protein is cAMP-dependent protein kinase type 3 (TPK3) of Saccharomyces cerevisiae (strain ATCC 204508 / S288c) (Baker's yeast).